We begin with the raw amino-acid sequence, 1024 residues long: Carbamoyl phosphate synthase large chain (1024 aa).

Residues 1-402 (MPKRTDLQTI…SLQKALRSTE (402 aa)) form a carboxyphosphate synthetic domain region. R129, R169, G175, G176, E208, I210, E215, G241, V242, H243, Q285, and E299 together coordinate ATP. The region spanning 133–328 (QAAMKKIGVE…IAKIAALLAV (196 aa)) is the ATP-grasp 1 domain. The Mg(2+) site is built by Q285, E299, and N301. Mn(2+)-binding residues include Q285, E299, and N301. The interval 403-546 (GDIRGVYAEM…YSTYEWEDEV (144 aa)) is oligomerization domain. The interval 547-929 (APTDKPKVVI…AFYRAQLGAK (383 aa)) is carbamoyl phosphate synthetic domain. In terms of domain architecture, ATP-grasp 2 spans 671–863 (NALCERLGLP…LAKSAARIAA (193 aa)). 10 residues coordinate ATP: R707, Q747, L749, E754, G779, V780, H781, S782, Q822, and E834. Residues Q822, E834, and N836 each coordinate Mg(2+). Mn(2+) is bound by residues Q822, E834, and N836. The MGS-like domain occupies 930 to 1024 (NYLPLEGTAL…GVRSLQEWVK (95 aa)). The allosteric domain stretch occupies residues 930-1024 (NYLPLEGTAL…GVRSLQEWVK (95 aa)).

This sequence belongs to the CarB family. In terms of assembly, composed of two chains; the small (or glutamine) chain promotes the hydrolysis of glutamine to ammonia, which is used by the large (or ammonia) chain to synthesize carbamoyl phosphate. Tetramer of heterodimers (alpha,beta)4. It depends on Mg(2+) as a cofactor. Mn(2+) serves as cofactor.

It carries out the reaction hydrogencarbonate + L-glutamine + 2 ATP + H2O = carbamoyl phosphate + L-glutamate + 2 ADP + phosphate + 2 H(+). The enzyme catalyses hydrogencarbonate + NH4(+) + 2 ATP = carbamoyl phosphate + 2 ADP + phosphate + 2 H(+). It participates in amino-acid biosynthesis; L-arginine biosynthesis; carbamoyl phosphate from bicarbonate: step 1/1. The protein operates within pyrimidine metabolism; UMP biosynthesis via de novo pathway; (S)-dihydroorotate from bicarbonate: step 1/3. In terms of biological role, large subunit of the glutamine-dependent carbamoyl phosphate synthetase (CPSase). CPSase catalyzes the formation of carbamoyl phosphate from the ammonia moiety of glutamine, carbonate, and phosphate donated by ATP, constituting the first step of 2 biosynthetic pathways, one leading to arginine and/or urea and the other to pyrimidine nucleotides. The large subunit (synthetase) binds the substrates ammonia (free or transferred from glutamine from the small subunit), hydrogencarbonate and ATP and carries out an ATP-coupled ligase reaction, activating hydrogencarbonate by forming carboxy phosphate which reacts with ammonia to form carbamoyl phosphate. This Deinococcus radiodurans (strain ATCC 13939 / DSM 20539 / JCM 16871 / CCUG 27074 / LMG 4051 / NBRC 15346 / NCIMB 9279 / VKM B-1422 / R1) protein is Carbamoyl phosphate synthase large chain.